Consider the following 1138-residue polypeptide: MGDFAAPAAAANGSSICINSSLNSSLGGAGIGVNNTPNSTPAAPSSNHPAAGGCGGSGGPGGGSAAVPKHSTVVERLRQRIEGCRRHHVNCENRYQQAQVEQLELERRDTVSLYQRTLEQRAKKSGAGTGKQQHPSKPQQDAEAASAEQRNHTLIMLQETVKRKLEGARSPLNGDQQNGACDGNFSPTSKRIRKDISAGMEAINNLPSNMPLPSASPLHQLDLKPSLPLQNSGTHTPGLLEDLSKNGRLPEIKLPVNGCSDLEDSFTILQSKDLKQEPLDDPTCIDTSETSLSNQNKLFSDINLNDQEWQELIDELANTVPEDDIQDLFNEDFEEKKEPEFSQPATETPLSQESASVKSDPSHSPFAHVSMGSPQARPSSSGPPFSTVSTATSLPSVASTPAAPNPASSPANCAVQSPQTPNQAHTPGQAPPRPGNGYLLNPAAVTVAGSASGPVAVPSSDMSPAEQLKQMAAQQQQRAKLMQQKQQQQQQQQQQQQQQQQQQQQQQQQQHSNQTSNWSPLGPPSSPYGAAFTAEKPNSPMMYPQAFNNQNPIVPPMANNLQKTTMNNYLPQNHMNMINQQPNNLGTNSLNKQHNILTYGNTKPLTHFNADLSQRMTPPVANPNKNPLMPYIQQQQQQQQQQQQQQQQQQPPPPQLQAPRAHLSEDQKRLLLMKQKGVMNQPMAYAALPSHGQEQHPVGLPRTTGPMQSSVPPGSGGMVSGASPAGPGFLGSQPQAAIMKQMLIDQRAQLIEQQKQQFLREQRQQQQQQQQQILAEQQLQQSHLPRQHLQPQRNPYPVQQVNQFQGSPQDIAAVRSQAALQSMRTSRLMAQNAGMMGIGPSQNPGTMATAAAQSEMGLAPYSTTPTSQPGMYNMSTGMTQMLQHPNQSGMSITHNQAQGPRQPASGQGVGMVSGFGQSMLVNSAITQQHPQMKGPVGQALPRPQAPPRLQSLMGTVQQGAQSWQQRSLQGMPGRTSGELGPFNNGASYPLQAGQPRLTKQHFPQGLSQSVVDANTGTVRTLNPAAMGRQMMPSLPGQQGTSQARPMVMSGLSQGVPGMPAFSQPPAQQQIPSGSFAPSSQSQAYERNAPQDVSYNYSGDGAGGSFPGLPDGADLVDSIIKGGPGDEWMQELDELFGNP.

The segment covering 37-48 (PNSTPAAPSSNH) has biased composition (polar residues). 6 disordered regions span residues 37–68 (PNSTPAAPSSNHPAAGGCGGSGGPGGGSAAVP), 119–148 (EQRAKKSGAGTGKQQHPSKPQQDAEAASAE), 169–188 (RSPLNGDQQNGACDGNFSPT), 207–237 (PSNMPLPSASPLHQLDLKPSLPLQNSGTHTP), 334–480 (EEKK…QRAK), and 503–547 (QQQQ…PQAF). The span at 52-64 (GGCGGSGGPGGGS) shows a compositional bias: gly residues. 2 stretches are compositionally biased toward polar residues: residues 130–139 (GKQQHPSKPQ) and 173–188 (NGDQQNGACDGNFSPT). 2 stretches are compositionally biased toward polar residues: residues 343–359 (QPATETPLSQESASVKS) and 372–394 (GSPQARPSSSGPPFSTVSTATSL). Residues 395 to 411 (PSVASTPAAPNPASSPA) are compositionally biased toward low complexity. Positions 414–426 (AVQSPQTPNQAHT) are enriched in polar residues. Positions 467–480 (QLKQMAAQQQQRAK) are enriched in low complexity. At lysine 603 the chain carries N6-acetyllysine. 5 disordered regions span residues 615 to 662 (RMTP…PRAH), 691 to 721 (HGQEQHPVGLPRTTGPMQSSVPPGSGGMVSG), 968 to 991 (LQGMPGRTSGELGPFNNGASYPLQ), 1024 to 1084 (AAMG…SQAY), and 1090 to 1109 (QDVSYNYSGDGAGGSFPGLP). Positions 633–649 (QQQQQQQQQQQQQQQQQ) are enriched in low complexity. Residues 1064–1084 (PPAQQQIPSGSFAPSSQSQAY) are compositionally biased toward polar residues.

Belongs to the mastermind family. Interacts through its N-terminal region with the ankyrin repeat region of the Notch proteins NOTCH1, NOTCH2, NOTCH3 and NOTCH4. Forms a DNA-binding complex with Notch proteins and RBPSUH/RBP-J kappa.

The protein localises to the nucleus speckle. Acts as a transcriptional coactivator for NOTCH proteins. Has been shown to amplify NOTCH-induced transcription of HES1. This is Mastermind-like protein 3 from Homo sapiens (Human).